Consider the following 1083-residue polypeptide: Ubiquitin-protein ligase E3C (1083 aa).

2 stretches are compositionally biased toward basic and acidic residues: residues 1-10 (MFSFEGDFKT) and 20-40 (SRKE…RKRE). A disordered region spans residues 1–40 (MFSFEGDFKTRPKVSLGGASRKEEKASLLHRTQEERRKRE). The interval 1 to 60 (MFSFEGDFKTRPKVSLGGASRKEEKASLLHRTQEERRKREEERRRLKNAVIIQSFIRGYR) is cis-determinant of acceptor ubiquitin-binding. The 30-residue stretch at 45–74 (RLKNAVIIQSFIRGYRDRKQQYFIQRSAFD) folds into the IQ domain. The tract at residues 354–386 (ASPTGTGCPDSTSDSEDDNEETDQPNSPEDGRV) is disordered. Acidic residues predominate over residues 366–376 (SDSEDDNEETD). Residues 744 to 1083 (NEPDLKKRIR…IECAAGFELS (340 aa)) form the HECT domain. Lys903 participates in a covalent cross-link: Glycyl lysine isopeptide (Lys-Gly) (interchain with G-Cter in ubiquitin); by autocatalysis. The active-site Glycyl thioester intermediate is the Cys1051.

The protein belongs to the UBE3C family. As to quaternary structure, interacts with 26S proteasomes. Interacts (via the HECT domain) with UBE2D1 and, less efficiently, with UBE2L3. Post-translationally, autoubiquitinated; promoting its own degradation.

The catalysed reaction is S-ubiquitinyl-[E2 ubiquitin-conjugating enzyme]-L-cysteine + [acceptor protein]-L-lysine = [E2 ubiquitin-conjugating enzyme]-L-cysteine + N(6)-ubiquitinyl-[acceptor protein]-L-lysine.. It participates in protein modification; protein ubiquitination. In terms of biological role, E3 ubiquitin-protein ligase that specifically catalyzes 'Lys-29'- and 'Lys-48'-linked polyubiquitin chains. Accepts ubiquitin from the E2 ubiquitin-conjugating enzyme UBE2D1 in the form of a thioester and then directly transfers the ubiquitin to targeted substrates. Associates with the proteasome and promotes elongation of ubiquitin chains on substrates bound to the 26S proteasome. Also catalyzes 'Lys-29'- and 'Lys-48'-linked ubiquitination of 26S proteasome subunit ADRM1/RPN13 in response to proteotoxic stress, impairing the ability of the proteasome to bind and degrade ubiquitin-conjugated proteins. Acts as a negative regulator of autophagy by mediating 'Lys-29'- and 'Lys-48'-linked ubiquitination of PIK3C3/VPS34, promoting its degradation. Can assemble unanchored poly-ubiquitin chains in either 'Lys-29'- or 'Lys-48'-linked polyubiquitin chains; with some preference for 'Lys-48' linkages. Acts as a negative regulator of type I interferon by mediating 'Lys-48'-linked ubiquitination of IRF3 and IRF7, leading to their degradation by the proteasome. Catalyzes ubiquitination and degradation of CAND2. This Mus musculus (Mouse) protein is Ubiquitin-protein ligase E3C.